Consider the following 208-residue polypeptide: Small ribosomal subunit protein uS4 (208 aa).

Residues 98-178 (SRLDNVVYRM…RPKWLEYDAE (81 aa)) enclose the S4 RNA-binding domain.

Belongs to the universal ribosomal protein uS4 family. Part of the 30S ribosomal subunit. Contacts protein S5. The interaction surface between S4 and S5 is involved in control of translational fidelity.

Functionally, one of the primary rRNA binding proteins, it binds directly to 16S rRNA where it nucleates assembly of the body of the 30S subunit. In terms of biological role, with S5 and S12 plays an important role in translational accuracy. The chain is Small ribosomal subunit protein uS4 from Acetivibrio thermocellus (strain ATCC 27405 / DSM 1237 / JCM 9322 / NBRC 103400 / NCIMB 10682 / NRRL B-4536 / VPI 7372) (Clostridium thermocellum).